Here is a 678-residue protein sequence, read N- to C-terminus: Glycine--tRNA ligase beta subunit (678 aa).

Belongs to the class-II aminoacyl-tRNA synthetase family. As to quaternary structure, tetramer of two alpha and two beta subunits.

The protein localises to the cytoplasm. The catalysed reaction is tRNA(Gly) + glycine + ATP = glycyl-tRNA(Gly) + AMP + diphosphate. The chain is Glycine--tRNA ligase beta subunit from Streptococcus pneumoniae (strain Taiwan19F-14).